We begin with the raw amino-acid sequence, 229 residues long: Potassium/proton antiporter CemA (229 aa).

3 consecutive transmembrane segments (helical) span residues 7 to 27, 106 to 126, and 189 to 209; these read FLPL…SLSF, MILH…YSIL, and IISG…KYWI.

The protein belongs to the CemA family.

The protein localises to the plastid. Its subcellular location is the chloroplast inner membrane. It carries out the reaction K(+)(in) + H(+)(out) = K(+)(out) + H(+)(in). Contributes to K(+)/H(+) antiport activity by supporting proton efflux to control proton extrusion and homeostasis in chloroplasts in a light-dependent manner to modulate photosynthesis. Prevents excessive induction of non-photochemical quenching (NPQ) under continuous-light conditions. Indirectly promotes efficient inorganic carbon uptake into chloroplasts. This is Potassium/proton antiporter CemA from Eucalyptus globulus subsp. globulus (Tasmanian blue gum).